Consider the following 214-residue polypeptide: Outer membrane lipoprotein MapA (214 aa).

The N-terminal stretch at 1–17 is a signal peptide; it reads MFKKFLIFIVPILFLSA. Cys-18 carries the N-palmitoyl cysteine lipid modification. Cys-18 carries S-diacylglycerol cysteine lipidation.

The protein localises to the cell outer membrane. The polypeptide is Outer membrane lipoprotein MapA (mapA) (Campylobacter jejuni subsp. jejuni serotype O:6 (strain 81116 / NCTC 11828)).